The chain runs to 78 residues: Translation initiation factor IF-1 (78 aa).

Residues Lys-4–Lys-78 enclose the S1-like domain.

Belongs to the IF-1 family. Component of the 30S ribosomal translation pre-initiation complex which assembles on the 30S ribosome in the order IF-2 and IF-3, IF-1 and N-formylmethionyl-tRNA(fMet); mRNA recruitment can occur at any time during PIC assembly.

The protein resides in the cytoplasm. In terms of biological role, one of the essential components for the initiation of protein synthesis. Stabilizes the binding of IF-2 and IF-3 on the 30S subunit to which N-formylmethionyl-tRNA(fMet) subsequently binds. Helps modulate mRNA selection, yielding the 30S pre-initiation complex (PIC). Upon addition of the 50S ribosomal subunit IF-1, IF-2 and IF-3 are released leaving the mature 70S translation initiation complex. The polypeptide is Translation initiation factor IF-1 (Mycoplasma pneumoniae (strain ATCC 29342 / M129 / Subtype 1) (Mycoplasmoides pneumoniae)).